The sequence spans 414 residues: Chromobox protein homolog 6 (414 aa).

Residues 11–69 enclose the Chromo domain; it reads FAAESIIKRRIRKGRIEYLVKWKGWAIKYSTWEPEENILDSRLIAAFEQKERERELYGP. Residue Ser-107 is modified to Phosphoserine. Disordered stretches follow at residues 127–152, 267–308, and 344–365; these read HRMS…PISP, APFD…VPNW, and ALEP…PEMS. Positions 267 to 287 are enriched in low complexity; it reads APFDAHSSSSSGCPSPTLQSS.

Component of a PRC1-like complex. Distinct PRC1-like core complexes are composed of a RING1 subunit (RING1B or RING1A), one of the six PCGF proteins (PCGF1-6), one PHC protein (PHC1-3) and one of the CBX proteins (CBX2, CBX4, CBX6, CBX7 or CBX8). Interacts with PCGF1, PCGF2, PCGF3, BMI1, PCGF5, PCGF6, RING1 and RNF2. May interact with H3C15 and H3C1. Interacts (via chromodomain) with single-stranded RNA (ssRNA). Post-translationally, ubiquitinated. Ubiquitination regulates the function of the Polycomb group (PcG) multiprotein PRC1-like complex. Deubiquitinated by USP26. As to expression, expressed in mouse embryonic stem cells.

Its subcellular location is the nucleus. The protein resides in the chromosome. In terms of biological role, component of a Polycomb group (PcG) multiprotein PRC1-like complex, a complex class required to maintain the transcriptionally repressive state of many genes, including Hox genes, throughout development. PcG PRC1 complex acts via chromatin remodeling and modification of histones; it mediates monoubiquitination of histone H2A 'Lys-119', rendering chromatin heritably changed in its expressibility. Possibly contributes to the target selectivity of the PRC1 complex by binding specific regions of chromatin. Recruitment to chromatin might occur in an H3K27me3-independent fashion. May have a PRC1-independent function in embryonic stem cells. The chain is Chromobox protein homolog 6 (Cbx6) from Mus musculus (Mouse).